The chain runs to 149 residues: Oligosaccharyltransferase complex subunit ostc (149 aa).

Topologically, residues 1 to 32 (MESLYRVPFTVLECPNLKLKKPSWLHMPSAMT) are cytoplasmic. Residues 33-53 (VYAMVVVSYFLITGGIIYDVI) form a helical membrane-spanning segment. Topologically, residues 54 to 83 (VEPPSVGSMTDEHGHQRPVAFLAYRVNGQY) are extracellular. A helical membrane pass occupies residues 84–104 (IMEGLASSFLFTMGGLGFIIL). Topologically, residues 105–117 (DRSNAPNIPKLNR) are cytoplasmic. A helical membrane pass occupies residues 118 to 138 (FLLLFIGFVCVLLSFFMARVF). Over 139–149 (MRMKLPGYLMG) the chain is Extracellular.

This sequence belongs to the OSTC family. Specific component of the STT3A-containing form of the oligosaccharyltransferase (OST) complex.

Its subcellular location is the membrane. The protein operates within protein modification; protein glycosylation. Its function is as follows. Specific component of the STT3A-containing form of the oligosaccharyl transferase (OST) complex that catalyzes the initial transfer of a defined glycan (Glc(3)Man(9)GlcNAc(2) in eukaryotes) from the lipid carrier dolichol-pyrophosphate to an asparagine residue within an Asn-X-Ser/Thr consensus motif in nascent polypeptide chains, the first step in protein N-glycosylation. N-glycosylation occurs cotranslationally and the complex associates with the Sec61 complex at the channel-forming translocon complex that mediates protein translocation across the endoplasmic reticulum (ER). All subunits are required for a maximal enzyme activity. In Xenopus tropicalis (Western clawed frog), this protein is Oligosaccharyltransferase complex subunit ostc.